The sequence spans 391 residues: MRASSPRGFRVHHGHAGIRGSHADLAVIASDVPAAVGAVFTRSRFAAPSVLLSRDAVADGIARGVVVLSGNANAGTGPRGYEDAAEVRHLVAGIVDCDERDVLIASTGPVGERYPMSRVRAHLRAVRGPLPGADFDGAAAAVLGTAGARPTIRRARCGDATLIGVAKGPGTGPAEQDDRSTLAFFCTDAQVSPVVLDDIFRRVADRAFHGLGFGADASTGDTAAVLANGLAGRVDLVAFEQVLGALALDLVRDVVRDSGCGGALVTVRVTGAHDTEQAGRVGRAVVDAPSLRAAVHGPAPDWAPVAAVAGGHGDEGPGRSPGRITIRVGGREVFPAPRDRARPDAVTAYPHGGEVTVHIDLGVPGRAPGAFTVHGCDLLAGYPRLGAGRAV.

Lys167 and Ser180 together coordinate substrate. The Nucleophile role is filled by Ser180.

This sequence belongs to the ArgJ family. Heterotetramer of two alpha and two beta chains.

Its subcellular location is the cytoplasm. The catalysed reaction is N(2)-acetyl-L-ornithine + L-glutamate = N-acetyl-L-glutamate + L-ornithine. The enzyme catalyses L-glutamate + acetyl-CoA = N-acetyl-L-glutamate + CoA + H(+). The protein operates within amino-acid biosynthesis; L-arginine biosynthesis; L-ornithine and N-acetyl-L-glutamate from L-glutamate and N(2)-acetyl-L-ornithine (cyclic): step 1/1. It participates in amino-acid biosynthesis; L-arginine biosynthesis; N(2)-acetyl-L-ornithine from L-glutamate: step 1/4. Functionally, catalyzes two activities which are involved in the cyclic version of arginine biosynthesis: the synthesis of N-acetylglutamate from glutamate and acetyl-CoA as the acetyl donor, and of ornithine by transacetylation between N(2)-acetylornithine and glutamate. The sequence is that of Arginine biosynthesis bifunctional protein ArgJ 2 from Streptomyces clavuligerus.